The sequence spans 591 residues: Aspartate--tRNA(Asp/Asn) ligase (591 aa).

Glutamate 174 is an L-aspartate binding site. The segment at 198–201 (QLFK) is aspartate. Residue arginine 220 coordinates L-aspartate. ATP contacts are provided by residues 220-222 (RDE) and glutamine 229. Residue histidine 450 participates in L-aspartate binding. Glutamate 483 lines the ATP pocket. Residue arginine 490 coordinates L-aspartate. 535 to 538 (GLDR) provides a ligand contact to ATP.

It belongs to the class-II aminoacyl-tRNA synthetase family. Type 1 subfamily. Homodimer.

It is found in the cytoplasm. The enzyme catalyses tRNA(Asx) + L-aspartate + ATP = L-aspartyl-tRNA(Asx) + AMP + diphosphate. Functionally, aspartyl-tRNA synthetase with relaxed tRNA specificity since it is able to aspartylate not only its cognate tRNA(Asp) but also tRNA(Asn). Reaction proceeds in two steps: L-aspartate is first activated by ATP to form Asp-AMP and then transferred to the acceptor end of tRNA(Asp/Asn). In Pseudomonas fluorescens (strain Pf0-1), this protein is Aspartate--tRNA(Asp/Asn) ligase.